A 1129-amino-acid polypeptide reads, in one-letter code: Kinesin-like protein KIP1 (1129 aa).

Residues 1 to 49 (MLEQAEKLMKRNSSGAMSAPQSKPLARSRSSTMPTTTQKRVRSSQQSEG) form a disordered region. Composition is skewed to polar residues over residues 11–21 (RNSSGAMSAPQ) and 28–48 (SRSS…QQSE). Residues 54–417 (NIKVYVRCRS…LEYATRAKSI (364 aa)) enclose the Kinesin motor domain. Residue 139-146 (GQTGTGKT) coordinates ATP. Coiled-coil stretches lie at residues 422 to 513 (QVNQ…ELDV), 681 to 765 (LEKE…QKIV), and 919 to 948 (DDQR…TLVN).

The protein belongs to the TRAFAC class myosin-kinesin ATPase superfamily. Kinesin family. BimC subfamily.

Its subcellular location is the cytoplasm. The protein resides in the cytoskeleton. The protein localises to the spindle. Required for assembly of the mitotic spindle. Interacts with spindle microtubules to produce an outwardly directed force acting upon the poles. Following spindle assembly, CIN8 and KIP1 apparently act to oppose a force that draws separated poles back together. This force seems to be mediate by KAR3. The polypeptide is Kinesin-like protein KIP1 (KIP1) (Eremothecium gossypii (strain ATCC 10895 / CBS 109.51 / FGSC 9923 / NRRL Y-1056) (Yeast)).